The following is a 321-amino-acid chain: Mas-related G-protein coupled receptor member B4 (321 aa).

The Extracellular segment spans residues 1 to 33 (MGTTTLAWNINNTAENGSYTEMFSCITKFNTLN). 2 N-linked (GlcNAc...) asparagine glycosylation sites follow: Asn11 and Asn16. Residues 34–54 (FLTVIIAVVGLAGNGIVLWLL) form a helical membrane-spanning segment. Topologically, residues 55–62 (AFHLHRNA) are cytoplasmic. Residues 63–83 (FSVYVLNLAGADFLYLFTQVV) traverse the membrane as a helical segment. Topologically, residues 84–97 (HSLECVLQLDNNSF) are extracellular. Residue Asn94 is glycosylated (N-linked (GlcNAc...) asparagine). The helical transmembrane segment at 98–118 (YILLIVTMFAYLAGLCMIAAI) threads the bilayer. Residues 119-146 (SAERCLSVMWPIWYHCQRPRHTSAIMCA) lie on the Cytoplasmic side of the membrane. Residues 147 to 167 (LVWVSSLLLSLVVGLGCGFLF) traverse the membrane as a helical segment. The Extracellular portion of the chain corresponds to 168–172 (SYYDY). A helical membrane pass occupies residues 173-193 (YFCITLNFITAAFLIVLSVVL). Residues 194–215 (SVSSLALLVKIVWGSHRIPVTR) are Cytoplasmic-facing. Residues 216-236 (FFVTIALTVVVFIYFGMPFGI) traverse the membrane as a helical segment. Over 237–257 (CWFLLSRIMEFDSIFFNNVYE) the chain is Extracellular. Residues 258 to 278 (IIEFLSCVNSCANPIIYFLVG) traverse the membrane as a helical segment. Residues 279 to 321 (SIRQHRLRWQSLKLLLQRAMQDTPEEESGERGPSQRSGELETV) lie on the Cytoplasmic side of the membrane. The segment at 299-321 (QDTPEEESGERGPSQRSGELETV) is disordered.

Belongs to the G-protein coupled receptor 1 family. Mas subfamily.

Its subcellular location is the membrane. In terms of biological role, orphan receptor. Probably involved in the function of nociceptive neurons. May regulate nociceptor function and/or development, including the sensation or modulation of pain. This is Mas-related G-protein coupled receptor member B4 (Mrgprb4) from Mus musculus (Mouse).